Consider the following 312-residue polypeptide: Short chain dehydrogenase pgmD (312 aa).

6 residues coordinate NADP(+): valine 46, isoleucine 47, lysine 171, tyrosine 207, lysine 211, and threonine 242. The active-site Proton donor is tyrosine 207. Lysine 211 acts as the Lowers pKa of active site Tyr in catalysis.

This sequence belongs to the short-chain dehydrogenases/reductases (SDR) family.

It participates in pigment biosynthesis. Its pathway is secondary metabolite biosynthesis. In terms of biological role, short chain dehydrogenase; part of the gene cluster that mediates the biosynthesis of pleosporalin A, ascomycone A, as well as a third cryptic naphthoquinone derived pigment, all responsible for the coloration of conidia. Essential for the production of pleosporalin A, but not the 2 other final products. The pathway begins with the biosynthesis of the cyclized heptaketide 3-acetonyl-1,6,8-trihydroxy-2-naphthaldehyde by the NR-PKS pgmA. The C-6 hydroxyl group is further methylated by the O-methyltransferase pgmB to yield fusarubinaldehyde which is in turn oxidized by the cytochrome P450 monooxygenase pgmC at C-9. The C-1 hydroxyl group is then methylated spontaneously. Although pgmE, pgmD and pgmH are essential for the production of pleosporalin A, it is not the case for the 2 other final products and it remains difficult to assign a specific function to each enzyme. PgmF and pgmG seem not to be involved in pigment biosynthesis although they were regulated by the cluster-specific transcription factor pgmR. The polypeptide is Short chain dehydrogenase pgmD (Aspergillus terreus).